The primary structure comprises 398 residues: DNA replication and repair protein RecF (398 aa).

ATP is bound at residue 30-37 (GSNGLGKT).

This sequence belongs to the RecF family.

It localises to the cytoplasm. In terms of biological role, the RecF protein is involved in DNA metabolism; it is required for DNA replication and normal SOS inducibility. RecF binds preferentially to single-stranded, linear DNA. It also seems to bind ATP. The chain is DNA replication and repair protein RecF from Renibacterium salmoninarum (strain ATCC 33209 / DSM 20767 / JCM 11484 / NBRC 15589 / NCIMB 2235).